The following is a 160-amino-acid chain: Transcription elongation factor GreA (160 aa).

Residues 10–37 (TLEGKAKLENELQELKTVKRKEVVERIK) adopt a coiled-coil conformation.

It belongs to the GreA/GreB family.

Necessary for efficient RNA polymerase transcription elongation past template-encoded arresting sites. The arresting sites in DNA have the property of trapping a certain fraction of elongating RNA polymerases that pass through, resulting in locked ternary complexes. Cleavage of the nascent transcript by cleavage factors such as GreA or GreB allows the resumption of elongation from the new 3'terminus. GreA releases sequences of 2 to 3 nucleotides. This is Transcription elongation factor GreA from Listeria welshimeri serovar 6b (strain ATCC 35897 / DSM 20650 / CCUG 15529 / CIP 8149 / NCTC 11857 / SLCC 5334 / V8).